Reading from the N-terminus, the 973-residue chain is EF-hand calcium-binding domain-containing protein 13 (973 aa).

The tract at residues 384 to 448 is disordered; sequence YSKNGINFKK…HSSLQKQVSS (65 aa). The span at 396 to 405 shows a compositional bias: basic and acidic residues; the sequence is EKGEIHDSKS. Over residues 406–418 the composition is skewed to low complexity; the sequence is KPQSLKSSTSLSK. EF-hand domains follow at residues 488-523, 524-559, 633-668, 756-791, 792-827, and 864-899; these read LLDE…ERSF, PECN…FGIY, LKKD…MRDA, PKVN…LNVN, LTEE…SPHF, and TANA…ILTI.

This chain is EF-hand calcium-binding domain-containing protein 13 (EFCAB13), found in Homo sapiens (Human).